The primary structure comprises 479 residues: MTDARKALPLDLSLENKVKDLSQADFGYKEMQLSEREMPGLMELIAKHGAEKPLKGLKVTGSLHMTIQTAMLIKTLYELGADIRWASCNIFSTQDHAAAAIADSGMAKVFAWKGETLEEYWWCTEMALTWPDGSGPDLIVDDGGDATMLIHKGVEAEKNPALLEKSYDNKEFQIVMNRIALSMKNDPGKWTRVAAKVRGVSEETTTGVHRLYHMEKDGSLLFPAINVNDSVTKSKFDNLYGCRESLADGIKRATDVMIAGKTVVVLGYGDVGKGCAHSMRGFGARVLVTEIDPICALQAAMEGFEVVTMDEAAPEGDIFVTATGNFKVITGEHMERMKDEAIVCNIGHFDNEIDMAYLEDSTECSCLNIKPQVDKWTLKSGRSIIVLAEGRLVNLGCATGHPSFVMSNSFTNQVLAQLELASNPDLERKVYILPKKLDEEVARLHLARLGAKLTTLTDEQAEYIGVDKTGPFKPDHYRY.

Substrate contacts are provided by Thr-66, Asp-142, and Glu-203. 204 to 206 (TTT) lines the NAD(+) pocket. Residues Lys-233 and Asp-237 each contribute to the substrate site. NAD(+)-binding positions include Asn-238, 267–272 (GYGDVG), Glu-290, Asn-325, 346–348 (IGH), and Asn-394.

It belongs to the adenosylhomocysteinase family. The cofactor is NAD(+).

The protein localises to the cytoplasm. The enzyme catalyses S-adenosyl-L-homocysteine + H2O = L-homocysteine + adenosine. Its pathway is amino-acid biosynthesis; L-homocysteine biosynthesis; L-homocysteine from S-adenosyl-L-homocysteine: step 1/1. May play a key role in the regulation of the intracellular concentration of adenosylhomocysteine. This is Adenosylhomocysteinase from Oleidesulfovibrio alaskensis (strain ATCC BAA-1058 / DSM 17464 / G20) (Desulfovibrio alaskensis).